The sequence spans 215 residues: Large ribosomal subunit protein uL4 (215 aa).

The interval 43–97 is disordered; it reads RRQGTHSTKTRAEVSGGGKKPWRQKGTGRARAGSTRSPIWVGGGKTHTPKPRDYS.

It belongs to the universal ribosomal protein uL4 family. Part of the 50S ribosomal subunit.

Functionally, one of the primary rRNA binding proteins, this protein initially binds near the 5'-end of the 23S rRNA. It is important during the early stages of 50S assembly. It makes multiple contacts with different domains of the 23S rRNA in the assembled 50S subunit and ribosome. Its function is as follows. Forms part of the polypeptide exit tunnel. This is Large ribosomal subunit protein uL4 from Brachyspira hyodysenteriae (strain ATCC 49526 / WA1).